We begin with the raw amino-acid sequence, 533 residues long: Yeast-form wall Protein 1 (533 aa).

The N-terminal stretch at Met1–Ala21 is a signal peptide. Asn115 is a glycosylation site (N-linked (GlcNAc...) asparagine). Disordered regions lie at residues Tyr161–Thr219 and Pro418–Ser451. Composition is skewed to low complexity over residues Pro163 to Ala214 and Pro427 to Ser451. A lipid anchor (GPI-anchor amidated glycine) is attached at Gly511. The propeptide at Ala512–Ile533 is removed in mature form.

It belongs to the flocculin family. In terms of processing, the GPI-anchor is attached to the protein in the endoplasmic reticulum and serves to target the protein to the cell surface. There, the glucosamine-inositol phospholipid moiety is cleaved off and the GPI-modified mannoprotein is covalently attached via its lipidless GPI glycan remnant to the 1,6-beta-glucan of the outer cell wall layer. Post-translationally, cleaved by SAP9 and SAP10, which leads to its release from the cell wall. N-glycosylated.

The protein localises to the secreted. It is found in the cell wall. Its subcellular location is the membrane. In terms of biological role, cell wall protein which plays an anti-adhesive role and promotes dispersal of yeast forms, which allows the organism to seek new sites for colonization. The chain is Yeast-form wall Protein 1 (YWP1) from Candida albicans (strain SC5314 / ATCC MYA-2876) (Yeast).